Reading from the N-terminus, the 318-residue chain is Tumor necrosis factor ligand superfamily member 11 (318 aa).

Residues 1-47 (MRRANRDYGKYLRGSEEMGSCPGVPHEGPLHPAPSAPAPAPPPAASR) are Cytoplasmic-facing. A disordered region spans residues 13–41 (RGSEEMGSCPGVPHEGPLHPAPSAPAPAP). The span at 31–41 (HPAPSAPAPAP) shows a compositional bias: pro residues. Residues 48-68 (FMFLALLGLGLGQVVCSIALF) form a helical; Signal-anchor for type II membrane protein membrane-spanning segment. Residues 69–318 (LYFRAQMDPN…FGAFKVQDID (250 aa)) lie on the Extracellular side of the membrane. One can recognise a THD domain in the interval 165 to 314 (PFAHLTINAA…DATYFGAFKV (150 aa)). 2 N-linked (GlcNAc...) asparagine glycosylation sites follow: Asn199 and Asn264.

The protein belongs to the tumor necrosis factor family. As to quaternary structure, homotrimer. Interacts with TNFRSF11A and TNFRSF11B. Interacts with FBN1 (via N-terminal domain) in a Ca(+2)-dependent manner. Interacts with TNFAIP6 (via both Link and CUB domains). The soluble form derives from the membrane form by proteolytic processing. In terms of tissue distribution, highly expressed in thymus and bone tissues.

The protein localises to the cell membrane. It localises to the secreted. In terms of biological role, cytokine that binds to TNFRSF11B/OPG and to TNFRSF11A/RANK. Osteoclast differentiation and activation factor. Augments the ability of dendritic cells to stimulate naive T-cell proliferation. May be an important regulator of interactions between T-cells and dendritic cells and may play a role in the regulation of the T-cell-dependent immune response. May also play an important role in enhanced bone-resorption in humoral hypercalcemia of malignancy. Induces osteoclastogenesis by activating multiple signaling pathways in osteoclast precursor cells, chief among which is induction of long lasting oscillations in the intracellular concentration of Ca (2+) resulting in the activation of NFATC1, which translocates to the nucleus and induces osteoclast-specific gene transcription to allow differentiation of osteoclasts. During osteoclast differentiation, in a TMEM64 and ATP2A2-dependent manner induces activation of CREB1 and mitochondrial ROS generation necessary for proper osteoclast generation. The sequence is that of Tumor necrosis factor ligand superfamily member 11 (Tnfsf11) from Rattus norvegicus (Rat).